Reading from the N-terminus, the 383-residue chain is S-adenosylmethionine synthase 1 (383 aa).

His15 lines the ATP pocket. Position 17 (Asp17) interacts with Mg(2+). Position 43 (Glu43) interacts with K(+). Residues Glu56 and Gln99 each coordinate L-methionine. The segment at Gln99 to Arg109 is flexible loop. ATP contacts are provided by residues Asp162 to Lys164, Arg228 to Phe229, Asp237, Arg243 to Lys244, Ala260, and Lys264. Residue Asp237 coordinates L-methionine. Position 268 (Lys268) interacts with L-methionine.

This sequence belongs to the AdoMet synthase family. As to quaternary structure, homotetramer; dimer of dimers. Mg(2+) serves as cofactor. Requires K(+) as cofactor.

The protein resides in the cytoplasm. The enzyme catalyses L-methionine + ATP + H2O = S-adenosyl-L-methionine + phosphate + diphosphate. It participates in amino-acid biosynthesis; S-adenosyl-L-methionine biosynthesis; S-adenosyl-L-methionine from L-methionine: step 1/1. Functionally, catalyzes the formation of S-adenosylmethionine (AdoMet) from methionine and ATP. The overall synthetic reaction is composed of two sequential steps, AdoMet formation and the subsequent tripolyphosphate hydrolysis which occurs prior to release of AdoMet from the enzyme. The chain is S-adenosylmethionine synthase 1 from Rhodopseudomonas palustris (strain BisB18).